Reading from the N-terminus, the 142-residue chain is Large ribosomal subunit protein uL11 (142 aa).

It belongs to the universal ribosomal protein uL11 family. As to quaternary structure, part of the ribosomal stalk of the 50S ribosomal subunit. Interacts with L10 and the large rRNA to form the base of the stalk. L10 forms an elongated spine to which L12 dimers bind in a sequential fashion forming a multimeric L10(L12)X complex. In terms of processing, one or more lysine residues are methylated.

Forms part of the ribosomal stalk which helps the ribosome interact with GTP-bound translation factors. The chain is Large ribosomal subunit protein uL11 from Leptospira borgpetersenii serovar Hardjo-bovis (strain JB197).